Here is a 311-residue protein sequence, read N- to C-terminus: Thioredoxin reductase (311 aa).

FAD is bound at residue 35–42 (ERGIPGGQ). A disulfide bridge connects residues cysteine 134 and cysteine 137. 277-286 (DVRDKGLRQI) lines the FAD pocket.

This sequence belongs to the class-II pyridine nucleotide-disulfide oxidoreductase family. As to quaternary structure, homodimer. The cofactor is FAD.

The protein resides in the cytoplasm. It carries out the reaction [thioredoxin]-dithiol + NADP(+) = [thioredoxin]-disulfide + NADPH + H(+). This chain is Thioredoxin reductase (trxB), found in Staphylococcus aureus (strain MRSA252).